Here is a 393-residue protein sequence, read N- to C-terminus: MSGNTFGKLFCVTSFGESHGPALGCVVDGCPPGMELSAEDIQQDLDRRKPGTSRHVTQRREPDTVEILSGVFEGKTTGTPIALLIRNEDQRSKDYSKIMDTFRPGHADYVYWQKYGIRDYRGGGRSSARETAVRVAAAAIAKKWLRARYGVVIRGHMAQLGPVEIPFKQWEAVGENPFFSADPDIVPSLEEFMDKLRKSGDSVGARIRVVAEGVPVGWGEPVYDRLDAEIAYGMMSINAVKGVEIGAGFASVSQKGTEHSDEISPGGFLSNNAGGILGGISTGQDIVVNIAVKPTSSIRLPRRSVDKMGNPAIVETHGRHDPCVGIRATPIAEAMLALVLMDHALRNRAQNADVACTTPKIPGHTGPREGQEEGPSDSEPKVEFADDPEPDEA.

Positions 48 and 54 each coordinate NADP(+). FMN contacts are provided by residues 125–127 (RSS), 238–239 (NA), Gly278, 293–297 (KPTSS), and Arg319. The tract at residues 355–393 (ACTTPKIPGHTGPREGQEEGPSDSEPKVEFADDPEPDEA) is disordered.

Belongs to the chorismate synthase family. Homotetramer. The cofactor is FMNH2.

The enzyme catalyses 5-O-(1-carboxyvinyl)-3-phosphoshikimate = chorismate + phosphate. It participates in metabolic intermediate biosynthesis; chorismate biosynthesis; chorismate from D-erythrose 4-phosphate and phosphoenolpyruvate: step 7/7. Functionally, catalyzes the anti-1,4-elimination of the C-3 phosphate and the C-6 proR hydrogen from 5-enolpyruvylshikimate-3-phosphate (EPSP) to yield chorismate, which is the branch point compound that serves as the starting substrate for the three terminal pathways of aromatic amino acid biosynthesis. This reaction introduces a second double bond into the aromatic ring system. The polypeptide is Chorismate synthase (Nitrosospira multiformis (strain ATCC 25196 / NCIMB 11849 / C 71)).